A 427-amino-acid chain; its full sequence is Nucleolar and spindle-associated protein 1 (427 aa).

The tract at residues 41–190 (AHLNPETRKE…LGNNKRTSAT (150 aa)) is disordered. The span at 43 to 55 (LNPETRKENKNQD) shows a compositional bias: basic and acidic residues. The segment covering 83–96 (TKTRRRRRKKHKTI) has biased composition (basic residues). Low complexity predominate over residues 119–128 (NFQNQENQEN). Ser-139 carries the phosphoserine modification. A compositionally biased stretch (basic and acidic residues) spans 159 to 179 (NDIKDSKKPLEKRSLCTDEFS). Positions 181-190 (LGNNKRTSAT) are enriched in polar residues. Thr-191 is modified (phosphothreonine). The segment at 235-312 (IVTPVPPRGR…QAVFRTPKSK (78 aa)) is disordered. Residues 243-367 (GRLSVPCTPA…HKGKLKPWGQ (125 aa)) are interaction with microtubules. The residue at position 246 (Ser-246) is a Phosphoserine. Position 250 is a phosphothreonine (Thr-250). Positions 252–264 (ARQQCPQGHSATK) are enriched in polar residues. Ser-261 carries the phosphoserine modification. Phosphothreonine is present on residues Thr-323 and Thr-334. 2 positions are modified to phosphoserine: Ser-337 and Ser-348. The disordered stretch occupies residues 354–427 (NYKPHKGKLK…RRNLGVTKAQ (74 aa)). The KEN box motif lies at 369–375 (KENNSLN). The stretch at 393-425 (LQTREERWKRQEQERKEKKEKLLEARRNLGVTK) forms a coiled coil. Basic and acidic residues predominate over residues 394–419 (QTREERWKRQEQERKEKKEKLLEARR).

Belongs to the NUSAP family. In terms of assembly, interacts with DNA and microtubules. Microtubule bundling is inhibited by IPO7, KPNA2 and KPNB1 while association with DNA is also inhibited by IPO7 and KPNA2. Post-translationally, ubiquitinated. Ubiquitination by FZR1 may lead to proteasome-dependent degradation of this protein.

Its subcellular location is the cytoplasm. It is found in the nucleus. The protein localises to the nucleolus. It localises to the cytoskeleton. The protein resides in the spindle. Its subcellular location is the chromosome. Its function is as follows. Microtubule-associated protein with the capacity to bundle and stabilize microtubules. May associate with chromosomes and promote the organization of mitotic spindle microtubules around them. The chain is Nucleolar and spindle-associated protein 1 (Nusap1) from Mus musculus (Mouse).